Here is a 375-residue protein sequence, read N- to C-terminus: Glutamate 5-kinase (375 aa).

Lysine 3 contributes to the ATP binding site. Substrate-binding residues include serine 44, aspartate 131, and asparagine 143. ATP-binding positions include serine 163–aspartate 164 and threonine 205–lysine 211. The PUA domain occupies glutamate 269–arginine 346.

Belongs to the glutamate 5-kinase family.

It is found in the cytoplasm. The catalysed reaction is L-glutamate + ATP = L-glutamyl 5-phosphate + ADP. The protein operates within amino-acid biosynthesis; L-proline biosynthesis; L-glutamate 5-semialdehyde from L-glutamate: step 1/2. Functionally, catalyzes the transfer of a phosphate group to glutamate to form L-glutamate 5-phosphate. The protein is Glutamate 5-kinase of Rhodospirillum rubrum (strain ATCC 11170 / ATH 1.1.1 / DSM 467 / LMG 4362 / NCIMB 8255 / S1).